The sequence spans 58 residues: MPGPCCNDVCECAAGGCKTGCVCTSCRCSPCDKCTSGCKCPSKEECAKTCSKPCECCP.

The beta stretch occupies residues 1 to 29 (MPGPCCNDVCECAAGGCKTGCVCTSCRCS). A divalent metal cation is bound by residues C5, C6, C10, C12, C17, C21, C23, C26, C28, C31, C34, C38, C40, C46, C50, C54, C56, and C57. The tract at residues 30–58 (PCDKCTSGCKCPSKEECAKTCSKPCECCP) is alpha.

Metallothioneins have a high content of cysteine residues that bind various heavy metals. Class I MTS in crustacea are involved in the sequestration of elevated levels of heavy-metal ions. This is Metallothionein from Astacus astacus (Noble crayfish).